We begin with the raw amino-acid sequence, 430 residues long: Adenylosuccinate synthetase (430 aa).

GTP contacts are provided by residues 13–19 (GDEGKGK) and 41–43 (GHT). Aspartate 14 acts as the Proton acceptor in catalysis. Mg(2+) contacts are provided by aspartate 14 and glycine 41. IMP-binding positions include 14-17 (DEGK), 39-42 (NAGH), threonine 130, arginine 144, glutamine 225, threonine 240, and arginine 304. Histidine 42 acts as the Proton donor in catalysis. 300 to 306 (ATTGRAR) is a substrate binding site. GTP-binding positions include arginine 306, 332–334 (KLD), and 414–416 (STG).

Belongs to the adenylosuccinate synthetase family. Homodimer. Requires Mg(2+) as cofactor.

It localises to the cytoplasm. It catalyses the reaction IMP + L-aspartate + GTP = N(6)-(1,2-dicarboxyethyl)-AMP + GDP + phosphate + 2 H(+). Its pathway is purine metabolism; AMP biosynthesis via de novo pathway; AMP from IMP: step 1/2. Functionally, plays an important role in the de novo pathway of purine nucleotide biosynthesis. Catalyzes the first committed step in the biosynthesis of AMP from IMP. This is Adenylosuccinate synthetase from Pseudomonas fluorescens (strain ATCC BAA-477 / NRRL B-23932 / Pf-5).